The chain runs to 338 residues: Cilia- and flagella-associated protein 36 (338 aa).

A coiled-coil region spans residues 142–179 (ISDLEQEEMKLVSEALRLSKEEYEREQLRRSAKELNCT). Disordered stretches follow at residues 175–220 (ELNC…ESPY) and 281–314 (KKQESKKMAHNSEVHEEKATCSKQEMTEEEKKSL). Over residues 187–202 (KQSNGSERTPSNTELP) the composition is skewed to polar residues. The stretch at 255-330 (NLSQAEKEQL…AEKLKEEVIL (76 aa)) forms a coiled coil.

This sequence belongs to the CFAP36 family.

The protein localises to the nucleus. The protein resides in the cytoplasm. It is found in the cell projection. Its subcellular location is the cilium. It localises to the flagellum. In Xenopus laevis (African clawed frog), this protein is Cilia- and flagella-associated protein 36.